The primary structure comprises 147 residues: MTMALDHKQIMRMLPHSYPFLLVDRVLECIPGKSIVALKNVTFNEPFFVGHFRDNPVMPGVLIIESMAQSSMLCVVSDREGDEASGNRSVYFMSIDGAKFRRVVVPGDTLTIKSAVIHMRGTTCKFQCHAYVGDELASEAQILAMMG.

His51 is a catalytic residue.

This sequence belongs to the thioester dehydratase family. FabZ subfamily.

The protein localises to the cytoplasm. It catalyses the reaction a (3R)-hydroxyacyl-[ACP] = a (2E)-enoyl-[ACP] + H2O. In terms of biological role, involved in unsaturated fatty acids biosynthesis. Catalyzes the dehydration of short chain beta-hydroxyacyl-ACPs and long chain saturated and unsaturated beta-hydroxyacyl-ACPs. The protein is 3-hydroxyacyl-[acyl-carrier-protein] dehydratase FabZ of Anaplasma marginale (strain Florida).